The following is a 325-amino-acid chain: Inner membrane protein YrbG (325 aa).

The Periplasmic segment spans residues 1–5; that stretch reads MLLAT. Residues 6–26 form a helical membrane-spanning segment; that stretch reads ALLIVGLLLVVYSADRLVFAA. Topologically, residues 27-37 are cytoplasmic; it reads SILCRTFGIPP. The chain crosses the membrane as a helical span at residues 38–58; it reads LIIGMTVVSIGTSLPEVIVSL. The Periplasmic portion of the chain corresponds to 59–67; that stretch reads AASLHEQRD. The chain crosses the membrane as a helical span at residues 68–88; the sequence is LAVGTALGSNIINILLILGLA. The Cytoplasmic segment spans residues 89–104; sequence ALVRPFTVHSDVLRRE. The helical transmembrane segment at 105–125 threads the bilayer; it reads LPLMLLVSVVAGSVLYDGQLS. Position 126 (arginine 126) is a topological domain, periplasmic. The helical transmembrane segment at 127-147 threads the bilayer; that stretch reads SDGIFLLFLAVLWLLFIVKLA. The Cytoplasmic portion of the chain corresponds to 148-169; that stretch reads RQAERQGTDSLTREQLAELPRD. A helical transmembrane segment spans residues 170–190; it reads GGLPVAFLWLGIALIIMPVAT. Residues 191–198 are Periplasmic-facing; that stretch reads RMVVDNAT. A helical transmembrane segment spans residues 199-219; the sequence is VLANYFAISELTMGLTAIAIG. Residues 220 to 243 lie on the Cytoplasmic side of the membrane; the sequence is TSLPELATAIAGVRKGENDIAVGN. A helical membrane pass occupies residues 244 to 264; that stretch reads IIGANIFNIVIVLGLPALITP. Residues 265-269 are Periplasmic-facing; the sequence is GEIDP. The helical transmembrane segment at 270-290 threads the bilayer; that stretch reads LAYSRDYSVMLLVSIIFALLC. The Cytoplasmic portion of the chain corresponds to 291 to 302; it reads WRRSPQPGRGVG. Residues 303-323 form a helical membrane-spanning segment; it reads VLLTGGFIVWLAMLYWLSPIL. The Periplasmic portion of the chain corresponds to 324–325; that stretch reads VE.

It belongs to the Ca(2+):cation antiporter (CaCA) (TC 2.A.19) family.

The protein localises to the cell inner membrane. The sequence is that of Inner membrane protein YrbG (yrbG) from Escherichia coli (strain K12).